The sequence spans 167 residues: MPLLDSFKVDHTKMNAPAVRIAKTMRTPKGDNITVFDLRFCIPNKEILSPKGIHTLEHLFAGFMRDHLNGDSIEIIDISPMGCRTGFYMSLIGTPNEQEVSEAWLASMQDVLGVQDQASIPELNIYQCGSYTEHSLEDAHEIAKNVIARGIGVNKNEDLSLDNSLLK.

3 residues coordinate Fe cation: His54, His58, and Cys128.

Belongs to the LuxS family. As to quaternary structure, homodimer. Requires Fe cation as cofactor.

The enzyme catalyses S-(5-deoxy-D-ribos-5-yl)-L-homocysteine = (S)-4,5-dihydroxypentane-2,3-dione + L-homocysteine. In terms of biological role, involved in the synthesis of autoinducer 2 (AI-2) which is secreted by bacteria and is used to communicate both the cell density and the metabolic potential of the environment. The regulation of gene expression in response to changes in cell density is called quorum sensing. Catalyzes the transformation of S-ribosylhomocysteine (RHC) to homocysteine (HC) and 4,5-dihydroxy-2,3-pentadione (DPD). In Haemophilus influenzae (strain PittEE), this protein is S-ribosylhomocysteine lyase.